The following is a 487-amino-acid chain: Betaine aldehyde dehydrogenase (487 aa).

K(+)-binding residues include serine 26 and aspartate 93. Glycine 150–tryptophan 152 lines the NAD(+) pocket. The active-site Charge relay system is lysine 162. NAD(+) contacts are provided by residues lysine 176 to glutamate 179 and serine 229 to threonine 232. Leucine 244 is a binding site for K(+). Glutamate 250 acts as the Proton acceptor in catalysis. NAD(+)-binding residues include glycine 252, cysteine 284, and glutamate 384. Cysteine 284 serves as the catalytic Nucleophile. Cysteine sulfenic acid (-SOH) is present on cysteine 284. The K(+) site is built by lysine 454 and glycine 457. Residue glutamate 461 is the Charge relay system of the active site.

It belongs to the aldehyde dehydrogenase family. Dimer of dimers. The cofactor is K(+).

It carries out the reaction betaine aldehyde + NAD(+) + H2O = glycine betaine + NADH + 2 H(+). It participates in amine and polyamine biosynthesis; betaine biosynthesis via choline pathway; betaine from betaine aldehyde: step 1/1. Involved in the biosynthesis of the osmoprotectant glycine betaine. Catalyzes the irreversible oxidation of betaine aldehyde to the corresponding acid. The polypeptide is Betaine aldehyde dehydrogenase (Rhizobium leguminosarum bv. trifolii (strain WSM2304)).